Consider the following 209-residue polypeptide: Dual-specificity protein phosphatase SDP1 (209 aa).

Residues 1–11 show a composition bias toward polar residues; that stretch reads MNIYTSPTRTP. Positions 1-43 are disordered; it reads MNIYTSPTRTPNIAPKSGQRPSLPMLATDERSTDKESPNEDRE. Positions 28–43 are enriched in basic and acidic residues; sequence TDERSTDKESPNEDRE. A disulfide bridge connects residues C47 and C142. A Tyrosine-protein phosphatase domain is found at 59–196; sequence GPLLVLPEKI…LMEWEVALNA (138 aa). Position 111 (H111) interacts with 4-O-phospho-L-tyrosine. C140 (phosphocysteine intermediate) is an active-site residue.

The protein belongs to the protein-tyrosine phosphatase family. Non-receptor class dual specificity subfamily.

The enzyme catalyses O-phospho-L-tyrosyl-[protein] + H2O = L-tyrosyl-[protein] + phosphate. Functionally, mediates dephosphorylation of MAPK substrates such as SLT2, acquiring enhanced catalytic activity under oxidative conditions. The sequence is that of Dual-specificity protein phosphatase SDP1 (SDP1) from Saccharomyces cerevisiae (strain ATCC 204508 / S288c) (Baker's yeast).